The primary structure comprises 76 residues: UPF0248 protein PAE2518 (76 aa).

It belongs to the UPF0248 family.

The protein is UPF0248 protein PAE2518 of Pyrobaculum aerophilum (strain ATCC 51768 / DSM 7523 / JCM 9630 / CIP 104966 / NBRC 100827 / IM2).